A 113-amino-acid polypeptide reads, in one-letter code: Hydrogenase maturation factor HypA (113 aa).

Histidine 2 is a binding site for Ni(2+). Zn(2+) contacts are provided by cysteine 73, cysteine 76, cysteine 89, and cysteine 92.

Belongs to the HypA/HybF family.

Functionally, involved in the maturation of [NiFe] hydrogenases. Required for nickel insertion into the metal center of the hydrogenase. This chain is Hydrogenase maturation factor HypA, found in Cereibacter sphaeroides (strain ATCC 17023 / DSM 158 / JCM 6121 / CCUG 31486 / LMG 2827 / NBRC 12203 / NCIMB 8253 / ATH 2.4.1.) (Rhodobacter sphaeroides).